Consider the following 291-residue polypeptide: Bifunctional protein FolD (291 aa).

NADP(+) is bound by residues 165–167 (GRS), Ser-190, and Ile-231.

The protein belongs to the tetrahydrofolate dehydrogenase/cyclohydrolase family. As to quaternary structure, homodimer.

It carries out the reaction (6R)-5,10-methylene-5,6,7,8-tetrahydrofolate + NADP(+) = (6R)-5,10-methenyltetrahydrofolate + NADPH. It catalyses the reaction (6R)-5,10-methenyltetrahydrofolate + H2O = (6R)-10-formyltetrahydrofolate + H(+). The protein operates within one-carbon metabolism; tetrahydrofolate interconversion. Catalyzes the oxidation of 5,10-methylenetetrahydrofolate to 5,10-methenyltetrahydrofolate and then the hydrolysis of 5,10-methenyltetrahydrofolate to 10-formyltetrahydrofolate. The polypeptide is Bifunctional protein FolD (Azoarcus sp. (strain BH72)).